Consider the following 303-residue polypeptide: NAD kinase (303 aa).

Asp-71 serves as the catalytic Proton acceptor. NAD(+) contacts are provided by residues 71–72 (DG), 145–146 (ND), Arg-156, Arg-173, Asp-175, 186–191 (TGYSLS), and Gln-245.

This sequence belongs to the NAD kinase family. It depends on a divalent metal cation as a cofactor.

Its subcellular location is the cytoplasm. It carries out the reaction NAD(+) + ATP = ADP + NADP(+) + H(+). Involved in the regulation of the intracellular balance of NAD and NADP, and is a key enzyme in the biosynthesis of NADP. Catalyzes specifically the phosphorylation on 2'-hydroxyl of the adenosine moiety of NAD to yield NADP. This Magnetococcus marinus (strain ATCC BAA-1437 / JCM 17883 / MC-1) protein is NAD kinase.